The chain runs to 334 residues: Fructose-1,6-bisphosphatase class 1 (334 aa).

Residues Glu-89, Asp-112, Leu-114, and Asp-115 each contribute to the Mg(2+) site. Substrate is bound by residues 115 to 118 (DGSS), Asn-208, Tyr-241, and Lys-271. A Mg(2+)-binding site is contributed by Glu-277.

Belongs to the FBPase class 1 family. As to quaternary structure, homotetramer. It depends on Mg(2+) as a cofactor.

Its subcellular location is the cytoplasm. The enzyme catalyses beta-D-fructose 1,6-bisphosphate + H2O = beta-D-fructose 6-phosphate + phosphate. It functions in the pathway carbohydrate biosynthesis; gluconeogenesis. The sequence is that of Fructose-1,6-bisphosphatase class 1 from Photorhabdus laumondii subsp. laumondii (strain DSM 15139 / CIP 105565 / TT01) (Photorhabdus luminescens subsp. laumondii).